Reading from the N-terminus, the 360-residue chain is MAGPLSGLRVVELAGIGPGPHAAMILGDLGADVVRIDRPSSVDGISRDAMLRNRRIVTADLKSDQGLELALKLIAKADVLIEGYRPGVTERLGLGPEECAKVNDRLIYARMTGWGQTGPRSQQAGHDINYISLNGILHAIGRGDERPVPPLNLVGDFGGGSMFLLVGILAALWERQSSGKGQVVDAAMVDGSSVLIQMMWAMRATGMWTDTRGANMLDGGAPYYDTYECADGRYVAVGAIEPQFYAAMLAGLGLDAAELPPQNDRARWPELRALLTEAFASHDRDHWGAVFANSDACVTPVLAFGEVHNEPHIIERNTFYEANGGWQPMPAPRFSRTASSQPRPPAATIDIEAVLTDWDG.

Substrate contacts are provided by residues R38, 59-62, 83-85, R91, and 125-130; these read ADLK, GYR, and GHDINY. Catalysis depends on H126, which acts as the Proton acceptor. The active-site Proton donor is D156.

The protein belongs to the CoA-transferase III family. Homodimer.

It carries out the reaction a (2S)-2-methylacyl-CoA = a (2R)-2-methylacyl-CoA. It catalyses the reaction (2S)-2-methyltetradecanoyl-CoA = (2R)-2-methyltetradecanoyl-CoA. The catalysed reaction is (2R)-pristanoyl-CoA = (2S)-pristanoyl-CoA. The enzyme catalyses (25S)-3-oxocholest-4-en-26-oyl-CoA = (25R)-3-oxocholest-4-en-26-oyl-CoA. It carries out the reaction (2S)-ibuprofenoyl-CoA = (2R)-ibuprofenoyl-CoA. With respect to regulation, inactivated by N,N-dialkylcarbamoyl-CoA substrate-product analogs. In terms of biological role, catalyzes the epimerization of (2R)- and (2S)-methylacyl-coenzyme A (CoA) thioesters. Accepts as substrates a wide range of alpha-methylacyl-CoAs, including (2R)-2-methylmyristoyl-CoA and (2S)-2-methylmyristoyl-CoA, (2R)-pristanoyl-CoA and (2S)-pristanoyl-CoA, and the cholesterol esters (25R)-3-oxo-cholest-4-en-26-oyl-CoA and (25S)-3-oxo-cholest-4-en-26-oyl-CoA. Can also catalyze the interconversion of the non-physiologic substrates (2R)-ibuprofenoyl-CoA and (2S)-ibuprofenoyl-CoA, which are potential competitive inhibitors of the enzyme. The protein is Alpha-methylacyl-CoA racemase of Mycobacterium tuberculosis (strain ATCC 25618 / H37Rv).